Here is a 295-residue protein sequence, read N- to C-terminus: UDP-N-acetylenolpyruvoylglucosamine reductase (295 aa).

The 168-residue stretch at glycine 27 to serine 194 folds into the FAD-binding PCMH-type domain. Arginine 174 is an active-site residue. The Proton donor role is filled by cysteine 221. Residue glutamate 287 is part of the active site.

Belongs to the MurB family. FAD serves as cofactor.

Its subcellular location is the cytoplasm. It catalyses the reaction UDP-N-acetyl-alpha-D-muramate + NADP(+) = UDP-N-acetyl-3-O-(1-carboxyvinyl)-alpha-D-glucosamine + NADPH + H(+). It functions in the pathway cell wall biogenesis; peptidoglycan biosynthesis. Its function is as follows. Cell wall formation. This Deinococcus geothermalis (strain DSM 11300 / CIP 105573 / AG-3a) protein is UDP-N-acetylenolpyruvoylglucosamine reductase.